A 219-amino-acid chain; its full sequence is Large ribosomal subunit protein bL25 (219 aa).

Residues Glu195–Lys219 form a disordered region. The segment covering Thr197–Pro206 has biased composition (low complexity). The segment covering Glu207–Lys219 has biased composition (basic and acidic residues).

This sequence belongs to the bacterial ribosomal protein bL25 family. CTC subfamily. As to quaternary structure, part of the 50S ribosomal subunit; part of the 5S rRNA/L5/L18/L25 subcomplex. Contacts the 5S rRNA. Binds to the 5S rRNA independently of L5 and L18.

This is one of the proteins that binds to the 5S RNA in the ribosome where it forms part of the central protuberance. The chain is Large ribosomal subunit protein bL25 from Fervidobacterium nodosum (strain ATCC 35602 / DSM 5306 / Rt17-B1).